An 824-amino-acid chain; its full sequence is Protein bicaudal D homolog 2 (824 aa).

Ser2 carries the N-acetylserine modification. Residues 20 to 269 (EWLRAEVKRL…ELSHYMSIND (250 aa)) adopt a coiled-coil conformation. Residues 25–398 (EVKRLSHELA…RLTENLSALR (374 aa)) form an interacts with DYNLL1, DYNC1H1, DYNC1I2, DCTN1 and DCTN2 region. Residues Ser190, Ser224, and Ser318 each carry the phosphoserine modification. The interval 311–330 (LPLDNKTSTPKKEGLAPPSP) is disordered. Thr319 is modified (phosphothreonine). Positions 334-599 (SDLLSELNIS…LLAPEAGRAD (266 aa)) are interaction with KIF5A. Residues 338–537 (SELNISEIQK…VTFSEELANL (200 aa)) adopt a coiled-coil conformation. 2 positions are modified to phosphoserine: Ser343 and Ser395. Disordered stretches follow at residues 398–425 (RRLQASKERQTALDNEKDRDSHEDGDYY), 559–622 (EGQG…DPRR), and 804–824 (EQTRRGRAKAAPKTKPATPSL). Positions 402-422 (ASKERQTALDNEKDRDSHEDG) are enriched in basic and acidic residues. Phosphoserine occurs at positions 568, 574, and 582. The interaction with RANBP2 stretch occupies residues 590 to 824 (LLAPEAGRAD…PKTKPATPSL (235 aa)). Phosphothreonine is present on Thr602. Low complexity predominate over residues 604-618 (DSSPSPGSSLPSPLS). The stretch at 666–808 (DKDKEALMEE…LELDHEQTRR (143 aa)) forms a coiled coil. Residues 666 to 814 (DKDKEALMEE…QTRRGRAKAA (149 aa)) are interacts with RAB6A. At Thr821 the chain carries Phosphothreonine. Phosphoserine is present on Ser823.

Belongs to the BicD family. Part of a tripartite complex with dynein and dynactin, acts an adapter linking the dynein motor complex and dynactin. Interacts with CPNE4 (via VWFA domain). Interacts with RAB6A. Interacts with NEK9. Interacts with DNAI1. Interacts with DYNC1H1. Interacts with RANBP2. Binds preferentially to tyrosinated microtubules than to detyrosinated microtubules. Interacts with DYNLL1, DYNC1I2; DCTN1, DCTN2 and KIF5A. Interacts with KIF1C. Post-translationally, phosphorylated by NEK9 in vitro. Ubiquitous.

It is found in the golgi apparatus. Its subcellular location is the cytoplasm. The protein resides in the cytoskeleton. The protein localises to the nucleus envelope. It localises to the nucleus. It is found in the nuclear pore complex. In terms of biological role, acts as an adapter protein linking the dynein motor complex to various cargos and converts dynein from a non-processive to a highly processive motor in the presence of dynactin. Facilitates and stabilizes the interaction between dynein and dynactin and activates dynein processivity (the ability to move along a microtubule for a long distance without falling off the track). Facilitates the binding of RAB6A to the Golgi by stabilizing its GTP-bound form. Regulates coat complex coatomer protein I (COPI)-independent Golgi-endoplasmic reticulum transport via its interaction with RAB6A and recruitment of the dynein-dynactin motor complex. Contributes to nuclear and centrosomal positioning prior to mitotic entry through regulation of both dynein and kinesin-1. During G2 phase of the cell cycle, associates with RANBP2 at the nuclear pores and recruits dynein and dynactin to the nuclear envelope to ensure proper positioning of the nucleus relative to centrosomes prior to the onset of mitosis. The chain is Protein bicaudal D homolog 2 from Homo sapiens (Human).